Here is a 247-residue protein sequence, read N- to C-terminus: MLPTFVRFSRIMSSGIEHAKRMAAYKAVDANFPPHAKVVGIGSGSTVVYVAERIGQLKNKHDFVCISTGFQSKQLIIDNGLTLGAIEQFPKVDIAFDGADEVDTNLNLIKGGGACLFQEKLVASSADKFIVVADTRKKSPSDLGIAWRKGVPIEVVPNSYAVVTRQLKELGAKSVVLRQGGGAKAGPVVTDNNNFLIDADFGSISDPGSLHQQIKLLVGVVETGLFVDMAHTAYFGDESGEVSEQSR.

The protein belongs to the ribose 5-phosphate isomerase family.

It is found in the cytoplasm. The enzyme catalyses aldehydo-D-ribose 5-phosphate = D-ribulose 5-phosphate. It functions in the pathway carbohydrate degradation; pentose phosphate pathway; D-ribose 5-phosphate from D-ribulose 5-phosphate (non-oxidative stage): step 1/1. This Meyerozyma guilliermondii (strain ATCC 6260 / CBS 566 / DSM 6381 / JCM 1539 / NBRC 10279 / NRRL Y-324) (Yeast) protein is Ribose-5-phosphate isomerase (RKI1).